We begin with the raw amino-acid sequence, 156 residues long: Small ribosomal subunit protein uS7 (156 aa).

It belongs to the universal ribosomal protein uS7 family. As to quaternary structure, part of the 30S ribosomal subunit. Contacts proteins S9 and S11.

Functionally, one of the primary rRNA binding proteins, it binds directly to 16S rRNA where it nucleates assembly of the head domain of the 30S subunit. Is located at the subunit interface close to the decoding center, probably blocks exit of the E-site tRNA. This chain is Small ribosomal subunit protein uS7, found in Synechococcus sp. (strain JA-3-3Ab) (Cyanobacteria bacterium Yellowstone A-Prime).